A 316-amino-acid polypeptide reads, in one-letter code: 4-hydroxy-3-methylbut-2-enyl diphosphate reductase (316 aa).

Cys-12 is a [4Fe-4S] cluster binding site. His-41 and His-74 together coordinate (2E)-4-hydroxy-3-methylbut-2-enyl diphosphate. Positions 41 and 74 each coordinate dimethylallyl diphosphate. His-41 and His-74 together coordinate isopentenyl diphosphate. A [4Fe-4S] cluster-binding site is contributed by Cys-96. (2E)-4-hydroxy-3-methylbut-2-enyl diphosphate is bound at residue His-124. His-124 provides a ligand contact to dimethylallyl diphosphate. Isopentenyl diphosphate is bound at residue His-124. Glu-126 serves as the catalytic Proton donor. Thr-169 provides a ligand contact to (2E)-4-hydroxy-3-methylbut-2-enyl diphosphate. Cys-199 provides a ligand contact to [4Fe-4S] cluster. Positions 227, 228, 229, and 271 each coordinate (2E)-4-hydroxy-3-methylbut-2-enyl diphosphate. 4 residues coordinate dimethylallyl diphosphate: Ser-227, Ser-228, Asn-229, and Ser-271. Residues Ser-227, Ser-228, Asn-229, and Ser-271 each contribute to the isopentenyl diphosphate site.

It belongs to the IspH family. It depends on [4Fe-4S] cluster as a cofactor.

It carries out the reaction isopentenyl diphosphate + 2 oxidized [2Fe-2S]-[ferredoxin] + H2O = (2E)-4-hydroxy-3-methylbut-2-enyl diphosphate + 2 reduced [2Fe-2S]-[ferredoxin] + 2 H(+). It catalyses the reaction dimethylallyl diphosphate + 2 oxidized [2Fe-2S]-[ferredoxin] + H2O = (2E)-4-hydroxy-3-methylbut-2-enyl diphosphate + 2 reduced [2Fe-2S]-[ferredoxin] + 2 H(+). Its pathway is isoprenoid biosynthesis; dimethylallyl diphosphate biosynthesis; dimethylallyl diphosphate from (2E)-4-hydroxy-3-methylbutenyl diphosphate: step 1/1. The protein operates within isoprenoid biosynthesis; isopentenyl diphosphate biosynthesis via DXP pathway; isopentenyl diphosphate from 1-deoxy-D-xylulose 5-phosphate: step 6/6. Catalyzes the conversion of 1-hydroxy-2-methyl-2-(E)-butenyl 4-diphosphate (HMBPP) into a mixture of isopentenyl diphosphate (IPP) and dimethylallyl diphosphate (DMAPP). Acts in the terminal step of the DOXP/MEP pathway for isoprenoid precursor biosynthesis. This Xylella fastidiosa (strain M23) protein is 4-hydroxy-3-methylbut-2-enyl diphosphate reductase.